The chain runs to 375 residues: Succinyl-diaminopimelate desuccinylase (375 aa).

Zn(2+) is bound at residue His-66. Asp-68 is a catalytic residue. Asp-99 contributes to the Zn(2+) binding site. Glu-133 serves as the catalytic Proton acceptor. Zn(2+)-binding residues include Glu-134, Glu-162, and His-348.

It belongs to the peptidase M20A family. DapE subfamily. As to quaternary structure, homodimer. The cofactor is Zn(2+). Co(2+) serves as cofactor.

The catalysed reaction is N-succinyl-(2S,6S)-2,6-diaminopimelate + H2O = (2S,6S)-2,6-diaminopimelate + succinate. Its pathway is amino-acid biosynthesis; L-lysine biosynthesis via DAP pathway; LL-2,6-diaminopimelate from (S)-tetrahydrodipicolinate (succinylase route): step 3/3. In terms of biological role, catalyzes the hydrolysis of N-succinyl-L,L-diaminopimelic acid (SDAP), forming succinate and LL-2,6-diaminopimelate (DAP), an intermediate involved in the bacterial biosynthesis of lysine and meso-diaminopimelic acid, an essential component of bacterial cell walls. The sequence is that of Succinyl-diaminopimelate desuccinylase from Stenotrophomonas maltophilia (strain R551-3).